Reading from the N-terminus, the 274-residue chain is Large ribosomal subunit protein uL2cz/uL2cy (274 aa).

Disordered stretches follow at residues 1–22 (MAIH…DSQV) and 225–274 (PVDH…RRSK).

This sequence belongs to the universal ribosomal protein uL2 family. As to quaternary structure, part of the 50S ribosomal subunit.

The protein localises to the plastid. The protein resides in the chloroplast. This Nasturtium officinale (Watercress) protein is Large ribosomal subunit protein uL2cz/uL2cy (rpl2-A).